A 375-amino-acid polypeptide reads, in one-letter code: DNA replication and repair protein RecF (375 aa).

An ATP-binding site is contributed by 30–37 (GENAQGKT).

Belongs to the RecF family.

The protein localises to the cytoplasm. In terms of biological role, the RecF protein is involved in DNA metabolism; it is required for DNA replication and normal SOS inducibility. RecF binds preferentially to single-stranded, linear DNA. It also seems to bind ATP. The chain is DNA replication and repair protein RecF from Bacillus anthracis (strain A0248).